Here is a 400-residue protein sequence, read N- to C-terminus: Carnosine N-methyltransferase (400 aa).

The segment at 1-51 is disordered; the sequence is MQRRQRAPPASQPAQDGGRSEDVEVQFSAGRLGSAAPAGPPARGTAEDEER. Residues 28–44 show a composition bias toward low complexity; that stretch reads SAGRLGSAAPAGPPARG. S-adenosyl-L-methionine is bound by residues glutamine 155, arginine 158, glycine 199, glutamate 220, aspartate 286, phenylalanine 287, and cysteine 303. Aspartate 307 contributes to the carnosine binding site. Tyrosine 315 contributes to the S-adenosyl-L-methionine binding site. Carnosine is bound by residues histidine 338 and tyrosine 389.

It belongs to the carnosine N-methyltransferase family. In terms of assembly, homodimer. Each monomer accommodates one molecule of carnosine in its active pocket, precisely anchoring the histidine imidazole ring such that only N1 is exposed and deprotonated for methylation.

It is found in the cytoplasm. The protein resides in the cytosol. The protein localises to the nucleus. The enzyme catalyses carnosine + S-adenosyl-L-methionine = anserine + S-adenosyl-L-homocysteine + H(+). Its function is as follows. N-methyltransferase that catalyzes the formation of anserine (beta-alanyl-N(Pi)-methyl-L-histidine) from carnosine. Anserine, a methylated derivative of carnosine (beta-alanyl-L-histidine), is an abundant constituent of vertebrate skeletal muscles. Also methylates other L-histidine-containing di- and tripeptides such as Gly-Gly-His, Gly-His and homocarnosine (GABA-His). The sequence is that of Carnosine N-methyltransferase from Mus musculus (Mouse).